A 1370-amino-acid polypeptide reads, in one-letter code: DNA-directed RNA polymerase subunit beta (1370 aa).

Belongs to the RNA polymerase beta chain family. In terms of assembly, the RNAP catalytic core consists of 2 alpha, 1 beta, 1 beta' and 1 omega subunit. When a sigma factor is associated with the core the holoenzyme is formed, which can initiate transcription.

The catalysed reaction is RNA(n) + a ribonucleoside 5'-triphosphate = RNA(n+1) + diphosphate. Its function is as follows. DNA-dependent RNA polymerase catalyzes the transcription of DNA into RNA using the four ribonucleoside triphosphates as substrates. The polypeptide is DNA-directed RNA polymerase subunit beta (Bordetella pertussis (strain Tohama I / ATCC BAA-589 / NCTC 13251)).